The chain runs to 618 residues: Mitochondrial Rho GTPase 2 (618 aa).

Residues 1 to 591 are Cytoplasmic-facing; the sequence is MKRDVRILLL…LNAVELGAAS (591 aa). The region spanning 2–168 is the Miro 1 domain; sequence KRDVRILLLG…FYYAQKAVLH (167 aa). GTP contacts are provided by G16, K17, T18, and S19. T18 contributes to the Mg(2+) binding site. Mg(2+)-binding residues include P35 and D57. 6 residues coordinate GTP: S59, N118, K119, D121, A149, and K150. EF-hand domains follow at residues 184 to 219 and 304 to 339; these read ACSRALTRIFNLSDQDNNQILSDDELNYFQKSCFGN and LGYQFLQRLFEKHDKDQDGALSPAELQNFFSVFPCM. 8 residues coordinate Ca(2+): D197, D199, N201, E208, D317, D319, D321, and E328. In terms of domain architecture, Miro 2 spans 416–579; sequence RNVFLCKVLG…YTKLATAATF (164 aa). GTP contacts are provided by G428, G430, K431, S432, and A433. S432 is a Mg(2+) binding site. E474 provides a ligand contact to Mg(2+). Residues K528, D530, and C559 each contribute to the GTP site. A helical; Anchor for type IV membrane protein transmembrane segment spans residues 592–614; sequence FWLRVALGAAVTALVGFTLYRVL. At 615–618 the chain is on the mitochondrial intermembrane side; sequence AKNK.

Belongs to the mitochondrial Rho GTPase family. In terms of assembly, homodimer.

The protein resides in the mitochondrion outer membrane. It carries out the reaction GTP + H2O = GDP + phosphate + H(+). It catalyses the reaction ATP + H2O = ADP + phosphate + H(+). The enzyme catalyses UTP + H2O = UDP + phosphate + H(+). In terms of biological role, atypical mitochondrial nucleoside-triphosphatase (NTPase) involved in mitochondrial trafficking. Probably involved in control of anterograde transport of mitochondria and their subcellular distribution. Can hydrolyze GTP, ATP and UTP. The polypeptide is Mitochondrial Rho GTPase 2 (RHOT2) (Gallus gallus (Chicken)).